Here is a 266-residue protein sequence, read N- to C-terminus: Pyridoxal phosphate phosphatase YigL (266 aa).

D8 serves as the catalytic Nucleophile. D8 is a Mg(2+) binding site. L9 lines the phosphate pocket. D10 provides a ligand contact to Mg(2+). Phosphate contacts are provided by residues 42-43 (TG) and K191. Mg(2+) is bound at residue D214. A phosphate-binding site is contributed by N217.

The protein belongs to the HAD-like hydrolase superfamily. Cof family. Mg(2+) is required as a cofactor. Requires Mn(2+) as cofactor. Co(2+) serves as cofactor. It depends on Zn(2+) as a cofactor.

The enzyme catalyses pyridoxal 5'-phosphate + H2O = pyridoxal + phosphate. It catalyses the reaction sugar phosphate + H2O = sugar + phosphate.. Functionally, catalyzes the dephosphorylation of pyridoxal-phosphate (PLP) and sugar phosphate. This is Pyridoxal phosphate phosphatase YigL (yigL) from Escherichia coli O157:H7.